A 122-amino-acid polypeptide reads, in one-letter code: Big defensin (122 aa).

The first 28 residues, 1–28 (MTRPSLVRCYSLFFTALIVMAIICPAWS), serve as a signal peptide directing secretion. The propeptide occupies 29–34 (EEIPKS). Cystine bridges form between cysteine 88-cysteine 119, cysteine 95-cysteine 114, and cysteine 99-cysteine 120.

The protein belongs to the big defensin family. Expressed in hemocytes.

The protein localises to the secreted. Significantly inhibits the growth of Gram-negative and Gram-positive bacteria and fungi in vitro. The sequence is that of Big defensin from Argopecten irradians (Bay scallop).